The chain runs to 193 residues: Holliday junction branch migration complex subunit RuvA (193 aa).

A domain I region spans residues 1–64; it reads MIGRIAGTLI…EDAHLLYGFG (64 aa). Residues 65 to 143 form a domain II region; the sequence is TAAERETFRQ…ADLGTVPGGP (79 aa). The flexible linker stretch occupies residues 144 to 151; it reads AVSDDAVD. Residues 151-193 are domain III; the sequence is DVLNALLALGYSDKEAAQAIKQVPAGTGVSEGIKLALKALSKG.

This sequence belongs to the RuvA family. Homotetramer. Forms an RuvA(8)-RuvB(12)-Holliday junction (HJ) complex. HJ DNA is sandwiched between 2 RuvA tetramers; dsDNA enters through RuvA and exits via RuvB. An RuvB hexamer assembles on each DNA strand where it exits the tetramer. Each RuvB hexamer is contacted by two RuvA subunits (via domain III) on 2 adjacent RuvB subunits; this complex drives branch migration. In the full resolvosome a probable DNA-RuvA(4)-RuvB(12)-RuvC(2) complex forms which resolves the HJ.

It localises to the cytoplasm. Functionally, the RuvA-RuvB-RuvC complex processes Holliday junction (HJ) DNA during genetic recombination and DNA repair, while the RuvA-RuvB complex plays an important role in the rescue of blocked DNA replication forks via replication fork reversal (RFR). RuvA specifically binds to HJ cruciform DNA, conferring on it an open structure. The RuvB hexamer acts as an ATP-dependent pump, pulling dsDNA into and through the RuvAB complex. HJ branch migration allows RuvC to scan DNA until it finds its consensus sequence, where it cleaves and resolves the cruciform DNA. The polypeptide is Holliday junction branch migration complex subunit RuvA (Ralstonia nicotianae (strain ATCC BAA-1114 / GMI1000) (Ralstonia solanacearum)).